A 321-amino-acid chain; its full sequence is Glucokinase (321 aa).

8-13 (GDVGGT) contributes to the ATP binding site.

This sequence belongs to the bacterial glucokinase family.

It is found in the cytoplasm. It carries out the reaction D-glucose + ATP = D-glucose 6-phosphate + ADP + H(+). The protein is Glucokinase of Escherichia fergusonii (strain ATCC 35469 / DSM 13698 / CCUG 18766 / IAM 14443 / JCM 21226 / LMG 7866 / NBRC 102419 / NCTC 12128 / CDC 0568-73).